Consider the following 155-residue polypeptide: MPEAGAIRPDATVLGFDVGSRRIGVAVGTALGAGARAVAVINVHANGPDWVALDRVHKEWRPAGLVVGDPLTLDDKDQPARKRAHAFARELRERYALPVVLIDERSSSVEAAQRFARERADGRKRRRDADTLDAMAAAVIVERWLSAPEQATLLP.

This sequence belongs to the YqgF nuclease family.

It is found in the cytoplasm. In terms of biological role, could be a nuclease involved in processing of the 5'-end of pre-16S rRNA. The protein is Putative pre-16S rRNA nuclease of Xanthomonas campestris pv. campestris (strain 8004).